The chain runs to 100 residues: Urease subunit gamma (100 aa).

It belongs to the urease gamma subunit family. Heterotrimer of UreA (gamma), UreB (beta) and UreC (alpha) subunits. Three heterotrimers associate to form the active enzyme.

Its subcellular location is the cytoplasm. The enzyme catalyses urea + 2 H2O + H(+) = hydrogencarbonate + 2 NH4(+). It functions in the pathway nitrogen metabolism; urea degradation; CO(2) and NH(3) from urea (urease route): step 1/1. The sequence is that of Urease subunit gamma from Mycolicibacterium gilvum (strain PYR-GCK) (Mycobacterium gilvum (strain PYR-GCK)).